Reading from the N-terminus, the 489-residue chain is COX3 mRNA-specific translational activator PET494 (489 aa).

It is found in the mitochondrion inner membrane. Its function is as follows. Required for the expression of the mitochondrial gene for cytochrome c oxidase subunit III (COX3). The polypeptide is COX3 mRNA-specific translational activator PET494 (PET494) (Saccharomyces bayanus (Yeast)).